The chain runs to 126 residues: Small ribosomal subunit protein uS13 (126 aa).

Residues 92-126 form a disordered region; sequence HRRGLPVRGQRTKTNARTRKGPKKTVAGKKKATRK.

This sequence belongs to the universal ribosomal protein uS13 family. Part of the 30S ribosomal subunit. Forms a loose heterodimer with protein S19. Forms two bridges to the 50S subunit in the 70S ribosome.

Functionally, located at the top of the head of the 30S subunit, it contacts several helices of the 16S rRNA. In the 70S ribosome it contacts the 23S rRNA (bridge B1a) and protein L5 of the 50S subunit (bridge B1b), connecting the 2 subunits; these bridges are implicated in subunit movement. Contacts the tRNAs in the A and P-sites. The polypeptide is Small ribosomal subunit protein uS13 (Deinococcus deserti (strain DSM 17065 / CIP 109153 / LMG 22923 / VCD115)).